The sequence spans 400 residues: Argininosuccinate synthase (400 aa).

Residues 10–18 (AYSGGVDTS) and alanine 38 contribute to the ATP site. An L-citrulline-binding site is contributed by tyrosine 89. ATP is bound at residue glycine 119. 3 residues coordinate L-aspartate: threonine 121, asparagine 125, and aspartate 126. Residue asparagine 125 participates in L-citrulline binding. Arginine 129, serine 177, serine 186, glutamate 262, and tyrosine 274 together coordinate L-citrulline.

This sequence belongs to the argininosuccinate synthase family. Type 1 subfamily. In terms of assembly, homotetramer.

The protein localises to the cytoplasm. It carries out the reaction L-citrulline + L-aspartate + ATP = 2-(N(omega)-L-arginino)succinate + AMP + diphosphate + H(+). The protein operates within amino-acid biosynthesis; L-arginine biosynthesis; L-arginine from L-ornithine and carbamoyl phosphate: step 2/3. With respect to regulation, activity decreases to 53.9% and 18.4% in the presence of 1 mM and 5 mM arginine, respectively. Activity also decreases to 80.1%, 78.1% and 92.1% in the presence of 5 mM ornithine, lysine and succinate, respectively. Activity does not decrease in the presence of glutamate, glutamine or asparagine. Functionally, catalyzes the condensation of citrulline and aspartate into argininosuccinate, the immediate precursor of arginine. SyArgG is the rate-limiting step in arginine biosynthesis in Synechocystis PCC 6803. The sequence is that of Argininosuccinate synthase from Synechocystis sp. (strain ATCC 27184 / PCC 6803 / Kazusa).